The primary structure comprises 345 residues: S-adenosylmethionine:tRNA ribosyltransferase-isomerase (345 aa).

The protein belongs to the QueA family. In terms of assembly, monomer.

It localises to the cytoplasm. It catalyses the reaction 7-aminomethyl-7-carbaguanosine(34) in tRNA + S-adenosyl-L-methionine = epoxyqueuosine(34) in tRNA + adenine + L-methionine + 2 H(+). Its pathway is tRNA modification; tRNA-queuosine biosynthesis. Its function is as follows. Transfers and isomerizes the ribose moiety from AdoMet to the 7-aminomethyl group of 7-deazaguanine (preQ1-tRNA) to give epoxyqueuosine (oQ-tRNA). The protein is S-adenosylmethionine:tRNA ribosyltransferase-isomerase of Azoarcus sp. (strain BH72).